Reading from the N-terminus, the 429-residue chain is Argininosuccinate lyase (429 aa).

The protein belongs to the lyase 1 family. Argininosuccinate lyase subfamily.

It localises to the cytoplasm. The catalysed reaction is 2-(N(omega)-L-arginino)succinate = fumarate + L-arginine. It functions in the pathway amino-acid biosynthesis; L-arginine biosynthesis; L-arginine from L-ornithine and carbamoyl phosphate: step 3/3. The chain is Argininosuccinate lyase from Pyrobaculum aerophilum (strain ATCC 51768 / DSM 7523 / JCM 9630 / CIP 104966 / NBRC 100827 / IM2).